The sequence spans 174 residues: Interleukin-1 receptor antagonist protein (174 aa).

An N-terminal signal peptide occupies residues 1-23 (MDIYIHGYLICLLLFLFRSETAC). Cysteine 89 and cysteine 139 are oxidised to a cystine. Asparagine 107 carries N-linked (GlcNAc...) asparagine glycosylation.

The protein belongs to the IL-1 family.

Its subcellular location is the secreted. Functionally, anti-inflammatory antagonist of interleukin-1 family of proinflammatory cytokines such as interleukin-1beta/IL1B and interleukin-1alpha/IL1A. Protects from immune dysregulation and uncontrolled systemic inflammation triggered by IL1 for a range of innate stimulatory agents such as pathogens. This chain is Interleukin-1 receptor antagonist protein (IL1RN), found in Bos taurus (Bovine).